The following is a 234-amino-acid chain: Large ribosomal subunit protein uL1 (234 aa).

Belongs to the universal ribosomal protein uL1 family. In terms of assembly, part of the 50S ribosomal subunit.

In terms of biological role, binds directly to 23S rRNA. The L1 stalk is quite mobile in the ribosome, and is involved in E site tRNA release. Its function is as follows. Protein L1 is also a translational repressor protein, it controls the translation of the L11 operon by binding to its mRNA. This Salmonella gallinarum (strain 287/91 / NCTC 13346) protein is Large ribosomal subunit protein uL1.